A 272-amino-acid chain; its full sequence is Dihydropteroate synthase (272 aa).

Residues 1–256 (MIKTKIMGIL…NVLLNTRLAQ (256 aa)) form the Pterin-binding domain. Position 11 (asparagine 11) interacts with Mg(2+). (7,8-dihydropterin-6-yl)methyl diphosphate contacts are provided by residues threonine 51, aspartate 89, asparagine 108, aspartate 172, lysine 208, and 244-246 (RVH).

The protein belongs to the DHPS family. Homodimer. Mg(2+) is required as a cofactor.

It carries out the reaction (7,8-dihydropterin-6-yl)methyl diphosphate + 4-aminobenzoate = 7,8-dihydropteroate + diphosphate. The protein operates within cofactor biosynthesis; tetrahydrofolate biosynthesis; 7,8-dihydrofolate from 2-amino-4-hydroxy-6-hydroxymethyl-7,8-dihydropteridine diphosphate and 4-aminobenzoate: step 1/2. Catalyzes the condensation of para-aminobenzoate (pABA) with 6-hydroxymethyl-7,8-dihydropterin diphosphate (DHPt-PP) to form 7,8-dihydropteroate (H2Pte), the immediate precursor of folate derivatives. The protein is Dihydropteroate synthase (folP) of Staphylococcus epidermidis (strain ATCC 12228 / FDA PCI 1200).